Here is a 309-residue protein sequence, read N- to C-terminus: Protein FdhE (309 aa).

The protein belongs to the FdhE family.

Its subcellular location is the cytoplasm. Functionally, necessary for formate dehydrogenase activity. This Salmonella paratyphi A (strain ATCC 9150 / SARB42) protein is Protein FdhE.